Reading from the N-terminus, the 90-residue chain is CRISPR-associated endonuclease Cas2 2 (90 aa).

D11 serves as a coordination point for Mg(2+).

This sequence belongs to the CRISPR-associated endoribonuclease Cas2 protein family. As to quaternary structure, homodimer, forms a heterotetramer with a Cas1 homodimer. Mn(2+) is required as a cofactor. It depends on Mg(2+) as a cofactor.

With respect to regulation, inhibited by EDTA and at pH 6.0. CRISPR (clustered regularly interspaced short palindromic repeat), is an adaptive immune system that provides protection against mobile genetic elements (viruses, transposable elements and conjugative plasmids). CRISPR clusters contain sequences complementary to antecedent mobile elements and target invading nucleic acids. CRISPR clusters are transcribed and processed into CRISPR RNA (crRNA). Involved in the integration of spacer DNA into the CRISPR cassette. Functions as a dsDNA endonuclease and as a weak ssRNase. This chain is CRISPR-associated endonuclease Cas2 2 (cas2b), found in Thermus thermophilus (strain ATCC BAA-163 / DSM 7039 / HB27).